Reading from the N-terminus, the 289-residue chain is Putative 2-aminoethylphosphonate transport system permease protein PhnU (289 aa).

6 helical membrane passes run 19–39 (WLLL…SLIV), 76–96 (FFAT…LVFI), 111–131 (FIAL…GSAG), 150–170 (FLYS…PLVM), 202–222 (VIFP…LLLT), and 254–274 (YTVA…LFSL). The region spanning 68-275 (LLNTLQIAFF…VLSLGLFSLY (208 aa)) is the ABC transmembrane type-1 domain.

Belongs to the binding-protein-dependent transport system permease family.

It localises to the cell inner membrane. Its function is as follows. Probably part of the PhnSTUV complex (TC 3.A.1.11.5) involved in 2-aminoethylphosphonate import. Probably responsible for the translocation of the substrate across the membrane. The polypeptide is Putative 2-aminoethylphosphonate transport system permease protein PhnU (phnU) (Salmonella typhi).